Reading from the N-terminus, the 362-residue chain is UDP-N-acetylglucosamine--N-acetylmuramyl-(pentapeptide) pyrophosphoryl-undecaprenol N-acetylglucosamine transferase (362 aa).

Residues 14–16 (TGG), Asn122, Arg163, Ser190, and Gln285 each bind UDP-N-acetyl-alpha-D-glucosamine.

The protein belongs to the glycosyltransferase 28 family. MurG subfamily.

It is found in the cell inner membrane. The catalysed reaction is di-trans,octa-cis-undecaprenyl diphospho-N-acetyl-alpha-D-muramoyl-L-alanyl-D-glutamyl-meso-2,6-diaminopimeloyl-D-alanyl-D-alanine + UDP-N-acetyl-alpha-D-glucosamine = di-trans,octa-cis-undecaprenyl diphospho-[N-acetyl-alpha-D-glucosaminyl-(1-&gt;4)]-N-acetyl-alpha-D-muramoyl-L-alanyl-D-glutamyl-meso-2,6-diaminopimeloyl-D-alanyl-D-alanine + UDP + H(+). It functions in the pathway cell wall biogenesis; peptidoglycan biosynthesis. Functionally, cell wall formation. Catalyzes the transfer of a GlcNAc subunit on undecaprenyl-pyrophosphoryl-MurNAc-pentapeptide (lipid intermediate I) to form undecaprenyl-pyrophosphoryl-MurNAc-(pentapeptide)GlcNAc (lipid intermediate II). The sequence is that of UDP-N-acetylglucosamine--N-acetylmuramyl-(pentapeptide) pyrophosphoryl-undecaprenol N-acetylglucosamine transferase from Prochlorococcus marinus (strain MIT 9215).